Reading from the N-terminus, the 459-residue chain is UDP-N-acetylmuramoylalanine--D-glutamate ligase (459 aa).

119 to 125 (GTNGKTT) contacts ATP.

It belongs to the MurCDEF family.

The protein resides in the cytoplasm. It catalyses the reaction UDP-N-acetyl-alpha-D-muramoyl-L-alanine + D-glutamate + ATP = UDP-N-acetyl-alpha-D-muramoyl-L-alanyl-D-glutamate + ADP + phosphate + H(+). It functions in the pathway cell wall biogenesis; peptidoglycan biosynthesis. In terms of biological role, cell wall formation. Catalyzes the addition of glutamate to the nucleotide precursor UDP-N-acetylmuramoyl-L-alanine (UMA). This chain is UDP-N-acetylmuramoylalanine--D-glutamate ligase, found in Lacticaseibacillus paracasei (strain ATCC 334 / BCRC 17002 / CCUG 31169 / CIP 107868 / KCTC 3260 / NRRL B-441) (Lactobacillus paracasei).